The sequence spans 275 residues: Large ribosomal subunit protein uL2 (275 aa).

The interval 224 to 275 (AMNPVDHPHGGGEAKAGQGNPHPVTPWGVPTKGYKTRKNKRTQQFIVRDRRG) is disordered.

It belongs to the universal ribosomal protein uL2 family. Part of the 50S ribosomal subunit. Forms a bridge to the 30S subunit in the 70S ribosome.

Its function is as follows. One of the primary rRNA binding proteins. Required for association of the 30S and 50S subunits to form the 70S ribosome, for tRNA binding and peptide bond formation. It has been suggested to have peptidyltransferase activity; this is somewhat controversial. Makes several contacts with the 16S rRNA in the 70S ribosome. The polypeptide is Large ribosomal subunit protein uL2 (Xanthomonas axonopodis pv. citri (strain 306)).